A 118-amino-acid polypeptide reads, in one-letter code: Vitelline coat lysin (118 aa).

The polypeptide is Vitelline coat lysin (Tegula pfeifferi (Pfeiffer's top shell)).